The following is a 581-amino-acid chain: DNA primase (581 aa).

The CHC2-type zinc-finger motif lies at C40 to C64. Residues N259–P341 enclose the Toprim domain. Positions 265, 309, and 311 each coordinate Mg(2+).

This sequence belongs to the DnaG primase family. In terms of assembly, monomer. Interacts with DnaB. Zn(2+) is required as a cofactor. It depends on Mg(2+) as a cofactor.

It carries out the reaction ssDNA + n NTP = ssDNA/pppN(pN)n-1 hybrid + (n-1) diphosphate.. In terms of biological role, RNA polymerase that catalyzes the synthesis of short RNA molecules used as primers for DNA polymerase during DNA replication. The polypeptide is DNA primase (Shigella flexneri).